Reading from the N-terminus, the 299-residue chain is Non-structural protein V (299 aa).

A disordered region spans residues 41–99; that stretch reads DNPGQERATCREEKAGSSGLSKPCLSAIGSTEGGAPRIRGQGPGESDDDAETLGIPPRN. The interval 110–120 is interaction with host STAT1; it reads YYVYDHSGEAV. A compositionally biased stretch (low complexity) spans 134-145; it reads GLDGDSTLSGGD. Positions 134 to 162 are disordered; the sequence is GLDGDSTLSGGDNESENSDVDIGEPDTEG. The segment covering 146–160 has biased composition (acidic residues); sequence NESENSDVDIGEPDT. Zn(2+) is bound by residues H232, C251, C255, C267, C269, C272, C276, and C279.

The protein belongs to the paramyxoviruses V protein family. As to quaternary structure, interacts with host IFIH1/MDA5 and DHX58/LGP2; these interactions are involved in the inhibition of the host type I interferon signaling pathway. Interacts with host TYK2; this interaction inhibits the type I interferon signaling pathway without affecting the type II pathway. Interacts with host IRF7; this interaction inhibits IRF7 translocation to the nucleus. Interacts with host CHUK. Interacts with host RELA/p65; this interaction inhibits the nuclear translocation of NF-KappaB. Interacts (via N-terminus) with host STAT1 and JAK1; these interactions inhibit STAT1 phosphorylation by Jak1 and thereby the type I interferon signaling pathway. Interacts (via C-terminus) with host STAT2; this interaction is involved in the inhibition of the host type I interferon signaling pathway. Forms a complex with host PPP1CA and PPP1CC; this interaction prevents dephosphorylation of host IFIH1/MDA5 and leads to the inhibition of the host type I interferon signaling pathway. Interacts with host IRF9; this interaction prevents the binding of IRF9 to STAT2 and thereby the type I interferon signaling pathway.

It localises to the host cytoplasm. Its function is as follows. Plays an essential role in the inhibition of host immune response. Prevents the establishment of cellular antiviral state by blocking interferon-alpha/beta (IFN-alpha/beta) production and signaling pathway. Interacts with host IFIH1/MDA5 and DHX58/LGP2 to inhibit the transduction pathway involved in the activation of IFN-beta promoter, thus protecting the virus against cell antiviral state. Blocks the type I interferon signaling pathway by interacting with host TYK2 and thereby inhibiting downstream STAT1 and STAT2 phosphorylation. Moderately affects the type II interferon signaling. This is Non-structural protein V (P/V) from Measles virus (strain Edmonston-Schwarz vaccine) (MeV).